The following is a 610-amino-acid chain: UvrABC system protein C (610 aa).

The 79-residue stretch at serine 16–valine 94 folds into the GIY-YIG domain. Residues aspartate 204–valine 239 form the UVR domain.

Belongs to the UvrC family. In terms of assembly, interacts with UvrB in an incision complex.

Its subcellular location is the cytoplasm. Functionally, the UvrABC repair system catalyzes the recognition and processing of DNA lesions. UvrC both incises the 5' and 3' sides of the lesion. The N-terminal half is responsible for the 3' incision and the C-terminal half is responsible for the 5' incision. In Salmonella enteritidis PT4 (strain P125109), this protein is UvrABC system protein C.